A 67-amino-acid chain; its full sequence is Large ribosomal subunit protein bL35 (67 aa).

Over residues 1-16 (MPKMKTKSGAKKRFRV) the composition is skewed to basic residues. The tract at residues 1 to 25 (MPKMKTKSGAKKRFRVRPGGTVKRG) is disordered.

Belongs to the bacterial ribosomal protein bL35 family.

The sequence is that of Large ribosomal subunit protein bL35 from Polaromonas sp. (strain JS666 / ATCC BAA-500).